Reading from the N-terminus, the 49-residue chain is Large ribosomal subunit protein bL33A (49 aa).

This sequence belongs to the bacterial ribosomal protein bL33 family.

The chain is Large ribosomal subunit protein bL33A from Streptococcus pneumoniae (strain Hungary19A-6).